Consider the following 365-residue polypeptide: Cobalt-precorrin-5B C(1)-methyltransferase (365 aa).

It belongs to the CbiD family.

It carries out the reaction Co-precorrin-5B + S-adenosyl-L-methionine = Co-precorrin-6A + S-adenosyl-L-homocysteine. It functions in the pathway cofactor biosynthesis; adenosylcobalamin biosynthesis; cob(II)yrinate a,c-diamide from sirohydrochlorin (anaerobic route): step 6/10. Catalyzes the methylation of C-1 in cobalt-precorrin-5B to form cobalt-precorrin-6A. This chain is Cobalt-precorrin-5B C(1)-methyltransferase, found in Methanococcus maripaludis (strain C5 / ATCC BAA-1333).